Here is a 148-residue protein sequence, read N- to C-terminus: 3-dehydroquinate dehydratase (148 aa).

Tyr23 functions as the Proton acceptor in the catalytic mechanism. Residues Asn75, His81, and Asp88 each contribute to the substrate site. His101 (proton donor) is an active-site residue. Substrate contacts are provided by residues 102–103 and Arg112; that span reads LS.

The protein belongs to the type-II 3-dehydroquinase family. As to quaternary structure, homododecamer.

The catalysed reaction is 3-dehydroquinate = 3-dehydroshikimate + H2O. Its pathway is metabolic intermediate biosynthesis; chorismate biosynthesis; chorismate from D-erythrose 4-phosphate and phosphoenolpyruvate: step 3/7. Functionally, catalyzes a trans-dehydration via an enolate intermediate. The sequence is that of 3-dehydroquinate dehydratase from Xanthomonas campestris pv. campestris (strain B100).